A 173-amino-acid chain; its full sequence is NEDD4-binding protein 2-like 1 (173 aa).

Residues 1–35 form a disordered region; that stretch reads MEESFLESFGRLSLRQQQPPPPRPPAPPPLRGTPP. Residues 18–32 are compositionally biased toward pro residues; it reads QPPPPRPPAPPPLRG.

In terms of assembly, interacts with dynactin subunit proteins, including DCTN4, DCTN5 and DCTN5.

Functionally, might play a role in adipocyte differentiation and triglyceride accumulation. In Bos taurus (Bovine), this protein is NEDD4-binding protein 2-like 1 (N4BP2L1).